We begin with the raw amino-acid sequence, 542 residues long: MYKNSIRTRPLKRFISNHAKGKFALDPAYKLKCGLEIHTQLNTRYKLFSYTSNEAENLTISPNTSTSHYDISLPGTQPRLNYEAVLYATKLALSLDSDINLISQFDRKHYFYGDQPQGYQVTQHYKPFAKNGKLTLYGAYEDINENEKTIRIEQLQIEQDTGKSLYASGADMTTMIDLNRSNVPLIELVTKPDFEDLKQVRAFIKKYQDLVRRLNICTGNLETGSMRIDVNLSVNDFARVELKNLPNTSSIMNAIKFEYERQLHIIKNGEGERLLRDTETRGWTGSETVKLRSKETSIDYRYMPDPEIPFITIADDVVHKVKSTLPVSADALLREFMNKPYNLPIKHAKILCISGNQNEMYDHEQLRKYYKDVCVHYQKEYPDDNLKIPSNWILNEFIGNLNKLETKLNEIYEILTPSTFFELIRLMKQGVITGNSSKLLLFHIVNNVKTGVFTKSSQINLKQLINEYELQAADQINEHELEEICRSIIDDIKDEKLLQNLISGKKKTSLKFLVGQGMRLSQGRLNPNELEKMFRQVLDIKW.

This sequence belongs to the GatB/GatE family. GatB subfamily. As to quaternary structure, subunit of the heterotrimeric GatFAB amidotransferase (AdT) complex, composed of A, B and F subunits.

Its subcellular location is the mitochondrion. The catalysed reaction is L-glutamyl-tRNA(Gln) + L-glutamine + ATP + H2O = L-glutaminyl-tRNA(Gln) + L-glutamate + ADP + phosphate + H(+). Functionally, allows the formation of correctly charged Gln-tRNA(Gln) through the transamidation of misacylated Glu-tRNA(Gln) in the mitochondria. The reaction takes place in the presence of glutamine and ATP through an activated gamma-phospho-Glu-tRNA(Gln). In Candida glabrata (strain ATCC 2001 / BCRC 20586 / JCM 3761 / NBRC 0622 / NRRL Y-65 / CBS 138) (Yeast), this protein is Glutamyl-tRNA(Gln) amidotransferase subunit B, mitochondrial.